A 154-amino-acid chain; its full sequence is SsrA-binding protein (154 aa).

The protein belongs to the SmpB family.

Its subcellular location is the cytoplasm. Its function is as follows. Required for rescue of stalled ribosomes mediated by trans-translation. Binds to transfer-messenger RNA (tmRNA), required for stable association of tmRNA with ribosomes. tmRNA and SmpB together mimic tRNA shape, replacing the anticodon stem-loop with SmpB. tmRNA is encoded by the ssrA gene; the 2 termini fold to resemble tRNA(Ala) and it encodes a 'tag peptide', a short internal open reading frame. During trans-translation Ala-aminoacylated tmRNA acts like a tRNA, entering the A-site of stalled ribosomes, displacing the stalled mRNA. The ribosome then switches to translate the ORF on the tmRNA; the nascent peptide is terminated with the 'tag peptide' encoded by the tmRNA and targeted for degradation. The ribosome is freed to recommence translation, which seems to be the essential function of trans-translation. This Staphylococcus saprophyticus subsp. saprophyticus (strain ATCC 15305 / DSM 20229 / NCIMB 8711 / NCTC 7292 / S-41) protein is SsrA-binding protein.